The chain runs to 449 residues: Ras-related GTP-binding protein D (449 aa).

A disordered region spans residues 1–55 (MSQVLGKPQPQGEDGGEDQEEDELVGLAGYEDGPESSDAELDSGPEEGESRRNSW). Acidic residues-rich tracts occupy residues 14–24 (DGGEDQEEDEL) and 32–47 (DGPE…GPEE). GTP contacts are provided by arginine 120, arginine 121, serine 122, glycine 123, lysine 124, serine 125, serine 126, and threonine 140. Residues arginine 121, serine 122, glycine 123, lysine 124, serine 125, serine 126, threonine 140, glutamate 144, and threonine 146 each contribute to the GDP site. GTP-binding residues include threonine 146, glycine 169, histidine 228, lysine 229, and aspartate 231. Positions 228, 229, 231, 269, and 270 each coordinate GDP. Isoleucine 270 contributes to the GTP binding site. A disordered region spans residues 428 to 449 (KAQSRLPKKTGATPNGTPRVLL).

It belongs to the GTR/RAG GTP-binding protein family. Forms a heterodimer with RRAGA in a sequence-independent manner and RRAGB. Heterodimerization stabilizes RRAG proteins. The GDP-bound form of RRAGD (in complex with the GTP-bound form of RRAGA or RRAGB), interacts with RPTOR, thereby promoting recruitment of mTORC1 to the lysosomes. Component of the lysosomal folliculin complex (LFC), composed of FLCN, FNIP1 (or FNIP2), RagA/RRAGA or RagB/RRAGB GDP-bound, RagC/RRAGC or RagD/RRAGD GTP-bound, and Ragulator. Interacts with NOL8. Interacts with SH3BP4; the interaction with this negative regulator is most probably direct, preferentially occurs with the inactive GDP-bound form of RRAGD and is negatively regulated by amino acids. The Rag heterodimer interacts with SLC38A9; the probable amino acid sensor. Interacts with SESN1, SESN2 and SESN3. The GDP-bound form interacts with TFEB. The GDP-bound form interacts with TFE3. As to expression, expressed in the distal tubule of the kidney.

The protein localises to the cytoplasm. The protein resides in the nucleus. Its subcellular location is the lysosome membrane. It catalyses the reaction GTP + H2O = GDP + phosphate + H(+). With respect to regulation, the activation of RagD/RRAGD is mediated by a GTPase activating protein (GAP). In high-amino acid conditions, activated by GTPase activating protein FLCN that stimulates RRAGD GTPase activity to turn it into its active GDP-bound form. In response to amino acid depletion, the GATOR1 complex inactivates RagC/RRAGC by securing the GTP-bound inactive form. Guanine nucleotide-binding protein that plays a crucial role in the cellular response to amino acid availability through regulation of the mTORC1 signaling cascade. Forms heterodimeric Rag complexes with RagA/RRAGA or RagB/RRAGB and cycles between an inactive GTP-bound and an active GDP-bound form: RagD/RRAGD is in its active form when GDP-bound RagD/RRAGD forms a complex with GTP-bound RagA/RRAGA (or RagB/RRAGB) and in an inactive form when GTP-bound RagD/RRAGD heterodimerizes with GDP-bound RagA/RRAGA (or RagB/RRAGB). In its active form, promotes the recruitment of mTORC1 to the lysosomes and its subsequent activation by the GTPase RHEB. This is a crucial step in the activation of the MTOR signaling cascade by amino acids. Also plays a central role in the non-canonical mTORC1 complex, which acts independently of RHEB and specifically mediates phosphorylation of MiT/TFE factors TFEB and TFE3: GDP-bound RagD/RRAGD mediates recruitment of MiT/TFE factors TFEB and TFE3. In Mus musculus (Mouse), this protein is Ras-related GTP-binding protein D.